The following is a 372-amino-acid chain: DNA replication and repair protein RecF (372 aa).

30–37 (GENGQGKT) contributes to the ATP binding site.

The protein belongs to the RecF family.

The protein resides in the cytoplasm. Its function is as follows. The RecF protein is involved in DNA metabolism; it is required for DNA replication and normal SOS inducibility. RecF binds preferentially to single-stranded, linear DNA. It also seems to bind ATP. This is DNA replication and repair protein RecF from Anaeromyxobacter dehalogenans (strain 2CP-C).